The sequence spans 630 residues: NUAK family SNF1-like kinase 2 (630 aa).

At M1 the chain carries N-acetylmethionine. Positions 57 to 307 (YEFLETLGKG…LEDVASHWWV (251 aa)) constitute a Protein kinase domain. ATP is bound by residues 63–71 (LGKGTYGKV) and K85. The Proton acceptor role is filled by D179. Residue T212 is modified to Phosphothreonine. 2 disordered regions span residues 361–504 (HVPG…RLHR) and 521–566 (GTAP…LDLP). Low complexity predominate over residues 464–476 (SGYYSSPEPSESG). Phosphoserine occurs at positions 529, 550, 553, and 579.

This sequence belongs to the protein kinase superfamily. CAMK Ser/Thr protein kinase family. SNF1 subfamily. Mg(2+) serves as cofactor. Post-translationally, phosphorylated at Thr-212 by STK11/LKB1 in complex with STE20-related adapter-alpha (STRADA) pseudo kinase and CAB39. Autophosphorylation is also possible at Thr-212. As to expression, expressed in liver, skin, testis, uterus, ovary, adrenal gland and brain (at protein level). Expressed in kidney, heart, skin, spleen, lung, uterus, liver and the exocrine and endocrine compartments of the human pancreas. A kinase-inactive isoform also appears to be expressed in the skin, spleen, lung, uterus, liver and testis.

It carries out the reaction L-seryl-[protein] + ATP = O-phospho-L-seryl-[protein] + ADP + H(+). The catalysed reaction is L-threonyl-[protein] + ATP = O-phospho-L-threonyl-[protein] + ADP + H(+). Activated by phosphorylation on Thr-212 by STK11 in complex with STE20-related adapter-alpha (STRAD alpha) pseudo kinase and CAB39. Functionally, stress-activated kinase involved in tolerance to glucose starvation. Induces cell-cell detachment by increasing F-actin conversion to G-actin. Expression is induced by CD95 or TNF-alpha, via NF-kappa-B. Protects cells from CD95-mediated apoptosis and is required for the increased motility and invasiveness of CD95-activated tumor cells. Phosphorylates LATS1 and LATS2. Plays a key role in neural tube closure during embryonic development through LATS2 phosphorylation and regulation of the nuclear localization of YAP1 a critical downstream regulatory target in the Hippo signaling pathway. This is NUAK family SNF1-like kinase 2 from Rattus norvegicus (Rat).